The following is a 630-amino-acid chain: Beta-phellandrene synthase, chloroplastic (630 aa).

A chloroplast-targeting transit peptide spans 1-48; sequence MALVSSAPKSCLHKSLIRSTHHELKPLRRTIPTLGMCRRGKSFTPSVS. Mg(2+) is bound by residues aspartate 381, aspartate 385, and aspartate 533. The short motif at 381–385 is the DDXXD motif element; sequence DDIYD.

It belongs to the terpene synthase family. Tpsd subfamily. It depends on Mg(2+) as a cofactor. Requires Mn(2+) as cofactor. K(+) is required as a cofactor.

The protein resides in the plastid. Its subcellular location is the chloroplast. It catalyses the reaction (2E)-geranyl diphosphate = (-)-beta-phellandrene + diphosphate. Its pathway is terpene metabolism; oleoresin biosynthesis. Its function is as follows. Converts geranyl diphosphate to four products with (-)-(4S)-beta-phellandrene (52%) as the major olefin, and lesser amounts of (-)-(1S,5S)-beta-pinene (34%), (-)-1S,5S-alpha-pinene (8.5%), and (-)-(4S)-limonene (6%). Involved in defensive oleoresin formation in conifers in response to insect attack or other injury. Involved in monoterpene (C10) olefins biosynthesis. In Abies grandis (Grand fir), this protein is Beta-phellandrene synthase, chloroplastic (ag8).